The chain runs to 332 residues: Probable L-asparaginase (332 aa).

One can recognise an Asparaginase/glutaminase domain in the interval 6 to 332 (PTIALLATGG…AKIQEMFEEY (327 aa)). The active-site O-isoaspartyl threonine intermediate is threonine 16. Residues serine 62 and 95–96 (TD) contribute to the substrate site.

Belongs to the asparaginase 1 family.

The protein localises to the cytoplasm. It carries out the reaction L-asparagine + H2O = L-aspartate + NH4(+). The polypeptide is Probable L-asparaginase (ansA) (Helicobacter pylori (strain J99 / ATCC 700824) (Campylobacter pylori J99)).